The sequence spans 726 residues: Methyltransferase FGSG_00040 (726 aa).

TPR repeat units lie at residues 187 to 220 (SSDI…GQNV), 224 to 257 (QLAF…AMPS), and 258 to 291 (EKSL…YPEN). The region spanning 336 to 531 (APVEIRESPG…AKTEIFFCYR (196 aa)) is the SET domain. Tyr-530 is a binding site for S-adenosyl-L-methionine.

Belongs to the class V-like SAM-binding methyltransferase superfamily.

It participates in mycotoxin biosynthesis. Functionally, methyltransferase; part of the gene cluster that mediates the biosynthesis of gramillins A and B, bicyclic lipopeptides that induce cell death in maize leaves but not in wheat leaves. The nonribosomal peptide synthetase GRA1 incorporates respectively a glutamic adic (Glu), a leucine (Leu), a serine (Ser), a hydroxyglutamine (HOGln), a 2-amino decanoic acid, and 2 cysteins (CysB and CysA). The biosynthesis of 2-amino decanoic acid incorporated in gramillins could be initiated by a fatty acid synthase composed of the alpha and beta subunits FGSG_00036 and FGSG_11656. The cytochrome P450 monooxygenase FGSG_15680 could hydroxylate the fatty acid chain. Subsequent oxidation to the ketone by the oxidoreductase FGSG_00048 and transamination by aminotransferase FGSG_00049 could form 2-amino-decanoic acid. On the other hand, FGSG_15680 could also be responsible for the HO-modified glutamine at the gamma-position. Whether hydroxylation occurs on the fully assembled product or on the Gln residue prior to assembly into the gramillins requires further proof. The thioredoxin FGSG_00043 could also be required for the disulfide-bond formation between CysA and CysB. The specific involvement of the remaining proteins from the cluster is more difficult to discern, but could have broader regulatory (FGSG_00040 and FGSG_11657) or enzymatic functions (FGSG_00044 and FGSG_00045). The final C-domain of GRA1 does not possess the expected sequence of a termination CT domain, often implicated in macrocyclization and release of a cyclopeptidein fungal NRPs; and the thioesterase FGSG_00047 may act in concert with the terminal C-domain of GRA1 to catalyze the formation of the macrocyclic anhydride and release of the products. This is Methyltransferase FGSG_00040 from Gibberella zeae (strain ATCC MYA-4620 / CBS 123657 / FGSC 9075 / NRRL 31084 / PH-1) (Wheat head blight fungus).